A 408-amino-acid chain; its full sequence is LL-diaminopimelate aminotransferase (408 aa).

Substrate is bound by residues Y15 and G42. Pyridoxal 5'-phosphate contacts are provided by residues Y72, 108 to 109 (SK), Y132, N187, Y218, and 246 to 248 (SFS). Substrate is bound by residues K109, Y132, and N187. Residue K249 is modified to N6-(pyridoxal phosphate)lysine. Residues R257 and N292 each contribute to the pyridoxal 5'-phosphate site. N292 and R388 together coordinate substrate.

This sequence belongs to the class-I pyridoxal-phosphate-dependent aminotransferase family. LL-diaminopimelate aminotransferase subfamily. In terms of assembly, homodimer. It depends on pyridoxal 5'-phosphate as a cofactor.

The catalysed reaction is (2S,6S)-2,6-diaminopimelate + 2-oxoglutarate = (S)-2,3,4,5-tetrahydrodipicolinate + L-glutamate + H2O + H(+). The protein operates within amino-acid biosynthesis; L-lysine biosynthesis via DAP pathway; LL-2,6-diaminopimelate from (S)-tetrahydrodipicolinate (aminotransferase route): step 1/1. Its function is as follows. Involved in the synthesis of meso-diaminopimelate (m-DAP or DL-DAP), required for both lysine and peptidoglycan biosynthesis. Catalyzes the direct conversion of tetrahydrodipicolinate to LL-diaminopimelate. This is LL-diaminopimelate aminotransferase from Leptospira interrogans serogroup Icterohaemorrhagiae serovar Lai (strain 56601).